The primary structure comprises 614 residues: Aspartate--tRNA ligase (614 aa).

Glutamate 174 is a binding site for L-aspartate. Residues 198–201 (QLFK) are aspartate. Arginine 220 contacts L-aspartate. ATP contacts are provided by residues 220-222 (RDE) and glutamine 229. Histidine 448 contributes to the L-aspartate binding site. Glutamate 482 provides a ligand contact to ATP. L-aspartate is bound at residue arginine 489. Position 534 to 537 (534 to 537 (GLDR)) interacts with ATP. The interval 587 to 614 (YEDSVKETEQRLEKEAQEDADKNSTWDE) is disordered.

The protein belongs to the class-II aminoacyl-tRNA synthetase family. Type 1 subfamily. Homodimer.

It is found in the cytoplasm. The catalysed reaction is tRNA(Asp) + L-aspartate + ATP = L-aspartyl-tRNA(Asp) + AMP + diphosphate. Catalyzes the attachment of L-aspartate to tRNA(Asp) in a two-step reaction: L-aspartate is first activated by ATP to form Asp-AMP and then transferred to the acceptor end of tRNA(Asp). In Lactobacillus johnsonii (strain CNCM I-12250 / La1 / NCC 533), this protein is Aspartate--tRNA ligase.